Consider the following 1477-residue polypeptide: Neurexin-1 (1477 aa).

An N-terminal signal peptide occupies residues 1-30 (MGTALLQRGGCFLLCLSLLLLGCWAELGSG). Residues 31–217 (LEFPGAEGQW…PPNSGGGSPC (187 aa)) form the Laminin G-like 1 domain. Over 31–1401 (LEFPGAEGQW…EVIRESSSTT (1371 aa)) the chain is Extracellular. Residues Asn-125 and Asn-190 are each glycosylated (N-linked (GlcNAc...) asparagine). The tract at residues 198–221 (DSGEVKLDDEPPNSGGGSPCEAGE) is disordered. The region spanning 213–256 (GGSPCEAGEEGEGGVCLNGGVCSVVDDQAVCDCSRTGFRGKDCS) is the EGF-like 1 domain. 2 disulfide bridges follow: Cys-228–Cys-243 and Cys-245–Cys-255. 2 consecutive Laminin G-like domains span residues 283 to 473 (IATF…AFKC) and 480 to 672 (DPIT…KPSC). 3 residues coordinate Ca(2+): Asp-329, Leu-346, and Met-407. Intrachain disulfides connect Cys-437–Cys-473, Cys-643–Cys-672, Cys-680–Cys-691, Cys-685–Cys-700, and Cys-702–Cys-712. In terms of domain architecture, EGF-like 2 spans 676-713 (TAKPCLSNPCKNNGMCRDGWNRYVCDCSGTGYLGRSCE). Laminin G-like domains lie at 718–891 (VLSY…IDYC) and 905–1080 (DPVT…ERGC). Ca(2+) contacts are provided by Asp-765 and Leu-782. Residue Asn-790 is glycosylated (N-linked (GlcNAc...) asparagine). Residue Arg-841 coordinates Ca(2+). 5 cysteine pairs are disulfide-bonded: Cys-883-Cys-891, Cys-1052-Cys-1080, Cys-1087-Cys-1098, Cys-1092-Cys-1107, and Cys-1109-Cys-1119. An EGF-like 3 domain is found at 1083–1120 (PSTTCQEDSCSNQGVCLQQWDGFSCDCSMTSFSGPLCN). The Laminin G-like 6 domain occupies 1126–1294 (YIFSKGGGQI…DANIAIVGNV (169 aa)). Ca(2+)-binding residues include Asp-1176 and Val-1193. A glycan (N-linked (GlcNAc...) asparagine) is linked at Asn-1223. 2 residues coordinate Ca(2+): Ile-1245 and Asn-1247. The disordered stretch occupies residues 1325 to 1390 (TTTLATSTAR…AGGREPYPGS (66 aa)). The O-linked (Xyl...) (heparan sulfate) serine glycan is linked to Ser-1355. A helical transmembrane segment spans residues 1402-1422 (GMVVGIVAAAALCILILLYAM). The Cytoplasmic portion of the chain corresponds to 1423-1477 (YKYRNRDEGSYHVDESRNYISNSAQSNGAVVKEKQPSSAKSSNKNKKNKDKEYYV). Residues 1444–1470 (NSAQSNGAVVKEKQPSSAKSSNKNKKN) form an interaction with CASK region. The segment at 1444 to 1477 (NSAQSNGAVVKEKQPSSAKSSNKNKKNKDKEYYV) is disordered.

The protein belongs to the neurexin family. In terms of assembly, interacts (via laminin G-like domain 2 and/or laminin G-like domain 6) with NLGN1 forming a heterotetramer, where one NLGN1 dimer interacts with one NRXN1 dimer. Also interacts (via laminin G-like domain 2 and/or laminin G-like domain 6) with NLGN2, NLGN3 and NLGN4L; interactions with NLGN1, NLGN2, NLGN3 and NLGN4L are calcium-dependent. Interacts (via cytoplasmic C-terminal region) with CASK (via the PDZ, SH3 and guanylate kinase-like domains). Interacts (via cytoplasmic C-terminus) with CASKIN1 and APBA1. Interacts (via laminin G-like domain 2) with NXPH1 and NXPH3. Alpha-type isoforms (neurexin-1-alpha) interact (via laminin G-like domain 2 and/or laminin G-like domain 6) with DAG1 (via alpha-dystroglycan chain). Interacts with LRRTM1, LRRTM2, LRRTM3 and LRRTM4. Interacts with SYT13 and SYTL1. Interacts with CBLN1, CBLN2 and, less avidly, with CBLN4. Interacts with CLSTN3. Post-translationally, O-glycosylated; contains heparan sulfate. Heparan sulfate attachment is required for synapse development by mediating interactions with neuroligins and LRRTM2. Brain.

The protein localises to the presynaptic cell membrane. Functionally, cell surface protein involved in cell-cell-interactions, exocytosis of secretory granules and regulation of signal transmission. Function is isoform-specific. Alpha-type isoforms have a long N-terminus with six laminin G-like domains and play an important role in synaptic signal transmission. Alpha-type isoforms play a role in the regulation of calcium channel activity and Ca(2+)-triggered neurotransmitter release at synapses and at neuromuscular junctions. They play an important role in Ca(2+)-triggered exocytosis of secretory granules in pituitary gland. They may affect their functions at synapses and in endocrine cells via their interactions with proteins from the exocytotic machinery. Likewise, alpha-type isoforms play a role in regulating the activity of postsynaptic NMDA receptors, a subtype of glutamate-gated ion channels. Both alpha-type and beta-type isoforms may play a role in the formation or maintenance of synaptic junctions via their interactions (via the extracellular domains) with neuroligin family members, CBLN1 or CBLN2. In vitro, triggers the de novo formation of presynaptic structures. May be involved in specification of excitatory synapses. Alpha-type isoforms were first identified as receptors for alpha-latrotoxin from spider venom. The chain is Neurexin-1 (NRXN1) from Homo sapiens (Human).